A 93-amino-acid polypeptide reads, in one-letter code: Exodeoxyribonuclease 7 small subunit (93 aa).

Residues 61–75 (IDDNGDEKVYEKQTD) show a composition bias toward basic and acidic residues. Positions 61-93 (IDDNGDEKVYEKQTDDPSNNGGGNRGFGSADEQ) are disordered.

Belongs to the XseB family. As to quaternary structure, heterooligomer composed of large and small subunits.

It is found in the cytoplasm. The catalysed reaction is Exonucleolytic cleavage in either 5'- to 3'- or 3'- to 5'-direction to yield nucleoside 5'-phosphates.. Its function is as follows. Bidirectionally degrades single-stranded DNA into large acid-insoluble oligonucleotides, which are then degraded further into small acid-soluble oligonucleotides. The polypeptide is Exodeoxyribonuclease 7 small subunit (Limosilactobacillus reuteri (strain DSM 20016) (Lactobacillus reuteri)).